We begin with the raw amino-acid sequence, 205 residues long: Lymphotoxin-alpha (205 aa).

The N-terminal stretch at 1-34 (MTPPGRLYLPRVRGTRLLFLLLGLLLALPPRAKG) is a signal peptide. Residues 63–205 (PAAHLVGDPS…SSVFFGAFAL (143 aa)) form the THD domain. The N-linked (GlcNAc...) asparagine glycan is linked to asparagine 96. Cysteine 120 and cysteine 156 form a disulfide bridge.

This sequence belongs to the tumor necrosis factor family. In terms of assembly, homotrimer, and heterotrimer of either two LTB and one LTA subunits or (less prevalent) two LTA and one LTB subunits. Interacts with TNFRSF14.

It localises to the secreted. The protein localises to the membrane. Functionally, cytokine that in its homotrimeric form binds to TNFRSF1A/TNFR1, TNFRSF1B/TNFBR and TNFRSF14/HVEM. In its heterotrimeric form with LTB binds to TNFRSF3/LTBR. Lymphotoxin is produced by lymphocytes and is cytotoxic for a wide range of tumor cells in vitro and in vivo. In Marmota monax (Woodchuck), this protein is Lymphotoxin-alpha (LTA).